Reading from the N-terminus, the 332-residue chain is MIGSNESSTEGPIPTSYLSFLAYLLGEWTGVEHTEDYLSYGAYLSWVLFPLAIVFILPVAIFFFCFNTSLLLLHIYKRRKNGFNEGHSGDVWYGAKEMLVNLWDGHGRVWHGYELHGDENIPEVPALIVFYHGASPVDYLYFMARLLIRRKRYCHVVADHFVFRLPGLKMFIEVLGVMHGPKEVCVSALKKGYLLAISPGGVREALFSDETYAIMWGNRKGFAQVAIDAKVPIIPMFTQNVREGIRTLGGIKIFRKLYERIRLPIVPMYGWFPVKFRTFIGEPIPYDPNITAEELTAKTKAALQALITKHQKIPGNILRALMERFQTRQKED.

Topologically, residues 1–10 (MIGSNESSTE) are lumenal. N5 is a glycosylation site (N-linked (GlcNAc...) asparagine). A helical membrane pass occupies residues 11 to 31 (GPIPTSYLSFLAYLLGEWTGV). Over 32 to 45 (EHTEDYLSYGAYLS) the chain is Cytoplasmic. Residues 46 to 66 (WVLFPLAIVFILPVAIFFFCF) form a helical membrane-spanning segment. Topologically, residues 67-332 (NTSLLLLHIY…ERFQTRQKED (266 aa)) are lumenal. The active site involves H132. N289 carries an N-linked (GlcNAc...) asparagine glycan.

The protein belongs to the diacylglycerol acyltransferase family. Highly divergent.

It is found in the endoplasmic reticulum membrane. The enzyme catalyses a 1,2-diacylglycerol + a 1,2-diacyl-sn-glycero-3-phosphocholine = a triacylglycerol + a 1-acyl-sn-glycero-3-phosphocholine. It catalyses the reaction a 1-O-alkyl-2-acyl-sn-glycero-3-phosphocholine + a 1,2-diacylglycerol = a 1-O-alkyl-sn-glycero-3-phosphocholine + a triacylglycerol. The catalysed reaction is a 2-acylglycerol + an acyl-CoA = a 1,2-diacylglycerol + CoA. It carries out the reaction an acyl-CoA + a 1,2-diacyl-sn-glycerol = a triacyl-sn-glycerol + CoA. The enzyme catalyses 2-(9Z-octadecenoyl)-glycerol + (9Z)-octadecenoyl-CoA = 1,2-di-(9Z-octadecenoyl)-glycerol + CoA. It catalyses the reaction 1,2-di-(9Z-octadecenoyl)-sn-glycerol + (9Z)-octadecenoyl-CoA = 1,2,3-tri-(9Z-octadecenoyl)-glycerol + CoA. Functionally, catalytic subunit of the alternative triglyceride biosynthesis pathway, which mediates formation of triacylglycerol from diacylglycerol and membrane phospholipids. Synthesizes triacylglycerol at the expense of membrane phospholipids, such as phosphatidylcholine (PC) and its ether-linked form (ePC), thereby altering the composition of membranes. The alternative triglyceride biosynthesis pathway is probably required to provide the energy required for rapid growth when fuel sources are limiting. It maintains mitochondrial function during periods of extracellular lipid starvation. Can also use acyl-CoA as donor: acts as a acyl-CoA:monoacylglycerol acyltransferase (MGAT), but also shows acyl-CoA:diacylglycerol acyltransferase (DGAT) activity. The polypeptide is DGAT1/2-independent enzyme synthesizing storage lipids (TMEM68) (Gallus gallus (Chicken)).